Here is a 209-residue protein sequence, read N- to C-terminus: PRA1 family protein A2 (209 aa).

Transmembrane regions (helical) follow at residues L51 to T72, A76 to F98, R142 to G162, and L163 to I183.

It belongs to the PRA1 family.

The protein localises to the endosome membrane. In terms of biological role, may be involved in both secretory and endocytic intracellular trafficking in the endosomal/prevacuolar compartments. The polypeptide is PRA1 family protein A2 (PRA1A2) (Arabidopsis thaliana (Mouse-ear cress)).